A 388-amino-acid chain; its full sequence is tRNA (guanine(26)-N(2))-dimethyltransferase (388 aa).

One can recognise a Trm1 methyltransferase domain in the interval 4–383 (RTIVEGTTKI…APIAEIKKII (380 aa)). Positions 41, 78, 94, and 123 each coordinate S-adenosyl-L-methionine. Residues C251, C254, C271, and C274 each coordinate Zn(2+).

The protein belongs to the class I-like SAM-binding methyltransferase superfamily. Trm1 family.

It catalyses the reaction guanosine(26) in tRNA + 2 S-adenosyl-L-methionine = N(2)-dimethylguanosine(26) in tRNA + 2 S-adenosyl-L-homocysteine + 2 H(+). Its function is as follows. Dimethylates a single guanine residue at position 26 of a number of tRNAs using S-adenosyl-L-methionine as donor of the methyl groups. The sequence is that of tRNA (guanine(26)-N(2))-dimethyltransferase from Methanosarcina mazei (strain ATCC BAA-159 / DSM 3647 / Goe1 / Go1 / JCM 11833 / OCM 88) (Methanosarcina frisia).